A 224-amino-acid chain; its full sequence is Envelope glycoprotein L (224 aa).

A signal peptide spans 1–22 (MGILGWVGLIAVGVLCVRGGLS). The interval 20 to 161 (GLSSTEYVIR…FDYSRTRRCV (142 aa)) is interaction with gH. Residues 20-161 (GLSSTEYVIR…FDYSRTRRCV (142 aa)) form an interaction with gL region. Residues 23-201 (STEYVIRSRV…LTTPPPIIAT (179 aa)) form the gL alphaherpesvirus-type domain. 2 disulfides stabilise this stretch: cysteine 44-cysteine 76 and cysteine 149-cysteine 160. Residues 161–224 (VGRQDLGPTN…RRRRPHSRRL (64 aa)) form a disordered region. Residue asparagine 170 is glycosylated (N-linked (GlcNAc...) asparagine; by host). Basic residues predominate over residues 213–224 (KSRRRRPHSRRL).

The protein belongs to the herpesviridae glycoprotein L (gL) family. Alphaherpesvirinae gL subfamily. Interacts with glycoprotein H (gH); this interaction is necessary for the correct processing and cell surface expression of gH. The heterodimer gH/gL seems to interact with gB trimers during fusion. N-glycosylated, O-glycosylated, and sialylated.

The protein localises to the virion membrane. The protein resides in the host cell membrane. It is found in the host Golgi apparatus. Its subcellular location is the host trans-Golgi network. The heterodimer glycoprotein H-glycoprotein L is required for the fusion of viral and plasma membranes leading to virus entry into the host cell. Acts as a functional inhibitor of gH and maintains gH in an inhibited form. Upon binding to host integrins, gL dissociates from gH leading to activation of the viral fusion glycoproteins gB and gH. This Human herpesvirus 1 (strain KOS) (HHV-1) protein is Envelope glycoprotein L.